A 237-amino-acid chain; its full sequence is Orotidine 5'-phosphate decarboxylase (237 aa).

Substrate is bound by residues Asp-11, Lys-34, 61–70 (DLKLHDIPNT), Thr-124, Arg-186, Gln-195, Gly-215, and Arg-216. Lys-63 (proton donor) is an active-site residue.

Belongs to the OMP decarboxylase family. Type 1 subfamily. Homodimer.

The enzyme catalyses orotidine 5'-phosphate + H(+) = UMP + CO2. Its pathway is pyrimidine metabolism; UMP biosynthesis via de novo pathway; UMP from orotate: step 2/2. Its function is as follows. Catalyzes the decarboxylation of orotidine 5'-monophosphate (OMP) to uridine 5'-monophosphate (UMP). The polypeptide is Orotidine 5'-phosphate decarboxylase (Lactococcus lactis subsp. cremoris (strain SK11)).